The chain runs to 430 residues: Adenylosuccinate synthetase (430 aa).

Residues 13–19 and 41–43 contribute to the GTP site; these read GDEGKGK and GHT. D14 (proton acceptor) is an active-site residue. Positions 14 and 41 each coordinate Mg(2+). Residues 14–17, 39–42, T130, R144, Q225, T240, and R304 each bind IMP; these read DEGK and NAGH. The active-site Proton donor is the H42. Residue 300–306 coordinates substrate; sequence ATTGRAR. GTP-binding positions include R306, 332 to 334, and 414 to 416; these read KLD and STG.

Belongs to the adenylosuccinate synthetase family. As to quaternary structure, homodimer. It depends on Mg(2+) as a cofactor.

It localises to the cytoplasm. The catalysed reaction is IMP + L-aspartate + GTP = N(6)-(1,2-dicarboxyethyl)-AMP + GDP + phosphate + 2 H(+). Its pathway is purine metabolism; AMP biosynthesis via de novo pathway; AMP from IMP: step 1/2. In terms of biological role, plays an important role in the de novo pathway of purine nucleotide biosynthesis. Catalyzes the first committed step in the biosynthesis of AMP from IMP. In Pseudomonas paraeruginosa (strain DSM 24068 / PA7) (Pseudomonas aeruginosa (strain PA7)), this protein is Adenylosuccinate synthetase.